A 592-amino-acid chain; its full sequence is Outer spore wall assembly protein SHE10 (592 aa).

A signal peptide spans 1-23; the sequence is MRFFKRFLLTLTVFIYTLRYLHC. 2 coiled-coil regions span residues 354–385 and 448–583; these read ENNI…LYEE and LNQF…KQMG. Positions 507–580 are enriched in basic and acidic residues; the sequence is QSEQEERIKS…EVRKQEEARK (74 aa). Positions 507-592 are disordered; it reads QSEQEERIKS…GSPPPPQQQQ (86 aa).

Belongs to the SHE10 family. As to quaternary structure, component of the mitochondria-localized RNase mitochondrial RNA-processing (RNase MRP) composed of one single RNA encoded by the NME1 gene and at least 31 proteins. Absent in the nucleus-localized RNase MRP (NuMRP).

The protein localises to the mitochondrion. Involved in spore wall assembly. May be a component of the mitochondrial RNase MRP (MtMRP), a ribonucleoprotein endoribonuclease involved in the cleaving RNA transcripts to generate primers for DNA replication in mitochondria. The sequence is that of Outer spore wall assembly protein SHE10 from Vanderwaltozyma polyspora (strain ATCC 22028 / DSM 70294 / BCRC 21397 / CBS 2163 / NBRC 10782 / NRRL Y-8283 / UCD 57-17) (Kluyveromyces polysporus).